Here is a 166-residue protein sequence, read N- to C-terminus: Kelch repeat protein B10 (166 aa).

Kelch repeat units lie at residues Thr25–Gly76 and Met77–Asn129.

It belongs to the poxviruses Kelch family.

The chain is Kelch repeat protein B10 from Oryctolagus cuniculus (Rabbit).